Here is a 789-residue protein sequence, read N- to C-terminus: Potassium transporter 4 (789 aa).

At 1 to 32 the chain is on the cytoplasmic side; that stretch reads MAPAESGVSPRRNPSQLSWMNLSSNLILAYQS. The residue at position 9 (Ser9) is a Phosphoserine. The helical transmembrane segment at 33–53 threads the bilayer; that stretch reads FGVVYGDLSTSPLYVFPSTFI. The Extracellular segment spans residues 54–68; the sequence is GKLHKHHNEDAVFGA. The chain crosses the membrane as a helical span at residues 69-89; the sequence is FSLIFWTLTLIPLLKYLLVLL. Residues 90-154 are Cytoplasmic-facing; that stretch reads SADDNGEGGT…FLEKHKRLRT (65 aa). The helical transmembrane segment at 155–175 threads the bilayer; it reads ALLLVVLFGAAMVIGDGVLTP. The Extracellular portion of the chain corresponds to 176-195; the sequence is ALSVLSSLSGLQATEKNVTD. The helical transmembrane segment at 196–216 threads the bilayer; that stretch reads GELLVLACVILVGLFALQHCG. Residues 217-219 lie on the Cytoplasmic side of the membrane; sequence THR. The helical transmembrane segment at 220-240 threads the bilayer; sequence VAFMFAPIVIIWLISIFFIGL. Residues 241 to 270 are Extracellular-facing; sequence YNIIRWNPKIIHAVSPLYIIKFFRVTGQDG. A helical transmembrane segment spans residues 271–291; the sequence is WISLGGVLLSVTGTEAMFANL. At 292-300 the chain is on the cytoplasmic side; that stretch reads GHFTSVSIR. The chain crosses the membrane as a helical span at residues 301–321; that stretch reads VAFAVVVYPCLVVQYMGQAAF. Residues 322–340 are Extracellular-facing; the sequence is LSKNLGSIPNSFYDSVPDP. The helical transmembrane segment at 341–361 threads the bilayer; that stretch reads VFWPVFVIATLAAIVGSQAVI. Residues 362–392 are Cytoplasmic-facing; the sequence is TTTFSIIKQCHALGCFPRIKVVHTSKHIYGQ. A helical transmembrane segment spans residues 393-413; the sequence is IYIPEINWILMILTLAMAIGF. Residues 414–424 are Extracellular-facing; sequence RDTTLIGNAYG. The chain crosses the membrane as a helical span at residues 425–445; it reads IACMVVMFITTFFMALVIVVV. Residues 446 to 450 lie on the Cytoplasmic side of the membrane; the sequence is WQKSC. A helical membrane pass occupies residues 451–471; sequence FLAALFLGTLWIIEGVYLSAA. Residues 472-478 lie on the Extracellular side of the membrane; sequence LMKVTEG. Residues 479–499 form a helical membrane-spanning segment; that stretch reads GWVPFVLTFIFMIAMYVWHYG. The Cytoplasmic segment spans residues 500-789; the sequence is TRRKYSFDLH…LIEVGMIYYV (290 aa).

It belongs to the HAK/KUP transporter (TC 2.A.72.3) family. In terms of tissue distribution, detected at very low levels in roots, stems, leaves and flowers of mature plants and strongly expressed in the roots of potassium-starved plants.

It localises to the cell membrane. High-affinity potassium transporter. The chain is Potassium transporter 4 (POT4) from Arabidopsis thaliana (Mouse-ear cress).